Reading from the N-terminus, the 468-residue chain is Eukaryotic translation initiation factor 3 subunit M (468 aa).

Residues 42–61 (PLIEPLRQQEQSEEEPDRKQ) form a disordered region. Positions 206–377 (DLELAQTHVV…SEFLVHRATY (172 aa)) constitute a PCI domain. The interval 418–468 (MQAAAEETGQGKSGDKGAKGGDRRRNPQQQQQSQPSQPQQAREVELVGGAE) is disordered. The span at 430-442 (SGDKGAKGGDRRR) shows a compositional bias: basic and acidic residues. A compositionally biased stretch (low complexity) spans 444-457 (PQQQQQSQPSQPQQ).

The protein belongs to the eIF-3 subunit M family. Component of the eukaryotic translation initiation factor 3 (eIF-3) complex.

The protein resides in the cytoplasm. Component of the eukaryotic translation initiation factor 3 (eIF-3) complex, which is involved in protein synthesis of a specialized repertoire of mRNAs and, together with other initiation factors, stimulates binding of mRNA and methionyl-tRNAi to the 40S ribosome. The eIF-3 complex specifically targets and initiates translation of a subset of mRNAs involved in cell proliferation. The polypeptide is Eukaryotic translation initiation factor 3 subunit M (Neosartorya fischeri (strain ATCC 1020 / DSM 3700 / CBS 544.65 / FGSC A1164 / JCM 1740 / NRRL 181 / WB 181) (Aspergillus fischerianus)).